Here is a 389-residue protein sequence, read N- to C-terminus: Cytochrome b (389 aa).

The next 4 membrane-spanning stretches (helical) occupy residues 32 to 52 (FGSLLALCLIIQILTGCFLAM), 76 to 98 (YILRYTHANVASFFFIFIYVHIG), 113 to 133 (LWSIGVIILVLMMAIGFLGYV), and 179 to 199 (FFSLHYILPFVLAALAVAHMI). Residues H82 and H96 each coordinate heme b. The heme b site is built by H183 and H197. H202 contacts a ubiquinone. The next 4 membrane-spanning stretches (helical) occupy residues 225–245 (FIFKDLVTIFAFFLVLSIIVF), 289–309 (LLGVLAMFGSLLILLIMPFVD), 322–342 (INMVFFTIFVCNFITLGLVGA), and 349–369 (FIFLGQVCTTIYFAYFFVIVP).

The protein belongs to the cytochrome b family. As to quaternary structure, fungal cytochrome b-c1 complex contains 10 subunits; 3 respiratory subunits, 2 core proteins and 5 low-molecular weight proteins. Cytochrome b-c1 complex is a homodimer. Heme b is required as a cofactor.

The protein resides in the mitochondrion inner membrane. Its function is as follows. Component of the ubiquinol-cytochrome c reductase complex (complex III or cytochrome b-c1 complex) that is part of the mitochondrial respiratory chain. The b-c1 complex mediates electron transfer from ubiquinol to cytochrome c. Contributes to the generation of a proton gradient across the mitochondrial membrane that is then used for ATP synthesis. This Mycena viridimarginata protein is Cytochrome b (COB).